We begin with the raw amino-acid sequence, 382 residues long: Mannitol-1-phosphate 5-dehydrogenase (382 aa).

3 to 14 is an NAD(+) binding site; that stretch reads ALHFGAGNIGRG.

This sequence belongs to the mannitol dehydrogenase family.

The catalysed reaction is D-mannitol 1-phosphate + NAD(+) = beta-D-fructose 6-phosphate + NADH + H(+). In Salmonella newport (strain SL254), this protein is Mannitol-1-phosphate 5-dehydrogenase.